The sequence spans 425 residues: 3-isopropylmalate dehydratase large subunit (425 aa).

Positions 306, 366, and 369 each coordinate [4Fe-4S] cluster.

The protein belongs to the aconitase/IPM isomerase family. LeuC type 2 subfamily. As to quaternary structure, heterodimer of LeuC and LeuD. The cofactor is [4Fe-4S] cluster.

It catalyses the reaction (2R,3S)-3-isopropylmalate = (2S)-2-isopropylmalate. It participates in amino-acid biosynthesis; L-leucine biosynthesis; L-leucine from 3-methyl-2-oxobutanoate: step 2/4. Functionally, catalyzes the isomerization between 2-isopropylmalate and 3-isopropylmalate, via the formation of 2-isopropylmaleate. This is 3-isopropylmalate dehydratase large subunit from Nautilia profundicola (strain ATCC BAA-1463 / DSM 18972 / AmH).